The primary structure comprises 773 residues: DEAD-box ATP-dependent RNA helicase 32 (773 aa).

Positions 28–71 are disordered; it reads IDAGKPARGTRPPPLSKSSSSPADTAAAKRGAKGAGGVPSKAAG. Over residues 43–56 the composition is skewed to low complexity; sequence SKSSSSPADTAAAK. Positions 80–108 match the Q motif motif; it reads ARFDELPLSNKTKDGLRKAGYTEMSEIQR. The region spanning 111-287 is the Helicase ATP-binding domain; that stretch reads LPHALCGRDV…RVSLKDPEYI (177 aa). 124–131 is a binding site for ATP; sequence AKTGSGKT. The DEAD box signature appears at 235–238; the sequence is DEAD. The Helicase C-terminal domain maps to 309–462; that stretch reads PLEQKLNMLW…IKKPNTEQLQ (154 aa). Residues 664 to 715 are a coiled coil; it reads DKDKISQRYAEMLREMQEHDKEDKLEHKRILREKKLQKKLKLKRKRNEEMDA. Basic residues predominate over residues 699–708; the sequence is LQKKLKLKRK. The segment at 699-755 is disordered; that stretch reads LQKKLKLKRKRNEEMDAGSENSGSESDRDQRTASKGKKRYFNSDDEEGSKDAAKDGD.

Belongs to the DEAD box helicase family. DDX10/DBP4 subfamily.

It carries out the reaction ATP + H2O = ADP + phosphate + H(+). In Oryza sativa subsp. japonica (Rice), this protein is DEAD-box ATP-dependent RNA helicase 32.